We begin with the raw amino-acid sequence, 74 residues long: MPVINIEDLTEKDKLKMEVDQLKKEVTLERMMVSKCCEEVRDYIEERSGEDPLVKGIPEDKNPFKELKGGCVIS.

At Cys-71 the chain carries Cysteine methyl ester. Residue Cys-71 is the site of S-farnesyl cysteine attachment. Residues 72 to 74 constitute a propeptide, removed in mature form; it reads VIS.

Belongs to the G protein gamma family. G proteins are composed of 3 units, alpha, beta and gamma. In terms of tissue distribution, retinal rod outer segment.

It is found in the cell membrane. Guanine nucleotide-binding proteins (G proteins) are involved as a modulator or transducer in various transmembrane signaling systems. The beta and gamma chains are required for the GTPase activity, for replacement of GDP by GTP, and for G protein-effector interaction. This is Guanine nucleotide-binding protein G(T) subunit gamma-T1 (Gngt1) from Mus musculus (Mouse).